Here is a 2252-residue protein sequence, read N- to C-terminus: MMDSTIILPYAKYNYSLNKYLFYNSNLDIDLDSFNFYKKYNNTLSLLKRKFLDLFCIPVSSSSPPAIQKNGLLSASNPKHLFAFANFVLDCGVNPFLQIWEETLANWPLFQGQSLLACCRTTAEVRREAAEASAEILRLKQVEREHAFQAEVKSLIAAGALPACAEGLARKIWSAGKDQRKVRVAIRTKLTKANALGAAHRSAVATAQAKAEVLREFEPSPAHIQIAVKAHIFAEKLSRKYADLTAQVRARRAAARDLRAKEIYLEIVDLLGAPLLSIPQQIKIKGKYLRRSVAAEVEVPHTRNPMAELVPYKGLGAVSADPRCWVVAQCGKFSATHANLCSEIYSMVIGPWVQLTDFSSIRQFVMNISFLKDFYPEDALIASLKEVNTEAQLAVAAIVTQEEVSKMEANARSANCRANIFKRIASRITSAACSVKNAFLDGCELTGKRLSEGVFSVVIGHFREALTTIKFELGVAMELVEVLIARVKSWFDTLLAKIDHALASLGKWACYALGILLGIGLCNLIETIIGGHGMLVSLFCTGVFATMAIKCAGGWDAAQREMVAMITTLAQSIFGRRKGLDSTDLNTRSIPLLTNVITAMTTFGTGLCKFQSSSIIEIGKLAGACHQMRMGKEALKEFAAMIMHYLGRIADKITGRETIFFDELSTLVSVDVRGWIRCAQGAILESYHTDPGCETFQDVIGRLVQEGQKLQVGVNGIPRKISADYASLIGQIMKDLLELQKRMMRCGTVTGRRKEPVWIYLWGPSHCGKSNFMDVLGMALCKHFDLPYTVCGRNVKDSFFSGYMGQTIMEIDDLSSIKTDPPMEGELINLVSCKDYPLNMADVADKPIYFKSQFVISSSNQEDVPAGAGVRDISSYRSRKAALIEVRRKPGVIFDPDNAMAASQARFKDPMTHMLLNGQNDENSWMEMDDVITECINISARHRAAQEKLQNASLRAKASLDPVTLASQEFLRKEVNSVYLEIPTLEIEKAGISGVRGGRCLYADGILYTLGTEFQLIPHPVENEGYQKLWAQRMKNMYLPAVTTGRYLNASSMIVTGFLRSLVNGDCAVLSVDALSTTATFTQKRIFESLNLAERVYLRALQCQIDAYTLDIPENPYSNVCWVKMLKALGQGREFIVSNGGGILMIAAAIILVLVCGWGFWKAFVGLFTGSMSLGAALAGCQEAEVKAHSVYSADGGDRGYRSRNIPINHRYSYARSQAGNGLLPASRLCVAIYGPRGVFISGMQYKNKCVMMTRHQAQSLNEGDELSVVFASTGESMMIRFHAYHIRENVGSEVVCWLAPSLPQLPCDLKGLFLEDAEVELPSNFKSMGYVLRQDSNAFHYDTLDTYAAVDKTPLVLKGVNGDDLYIHEIPEKIVFHYESRNNDCGMLLTCQLSGKMKVVGMLVAGKDKTSWACILPNPHLAELKSQIEYIPEFGEAEEGYFKVGHVSPKEAPTMPKKTNSVQVPQALRVPCDLPIKEPSIISKNDPRCPANVDPPKAAMKKKFQQPMLDLDQKCLDEIAGDMLETWYDCEDSILSDIPLATAINGIPAGCEDAELENFVMKTSPGYPYFKNKGLGKGKHPYFEECEDGSLKLKEGSQAAELYENMAQFAKEEVPELVVIECPKDELLPARKIKVGPCRLFEIMPLHYNLLLRVKTCAFTAFLQHNRHRLPCQVGTNPYSREWGHLLNRLRRVKTNEAINCDYSGFDGLLTPQLVEMMAKMINRLYLRSGESEVMQAQRLNMIMALCGRYALVGTQVYKVNCGLPSGFALTVVMNSIFNEILIRYAYKTLAPTPEKNSFGINVCLLVYGDDNLISVSPAVASWFTGEAIRVTLAEKRIKITDGSDKDAPTIEAKPFSELDFLKRKFYVHPEHGQVWAPLDKSAIFSCLHWLTPQKSKFALQEKACDYLGEVDVVEELIINVNVSLVELYLHNDKEEFNRVRSFYIARLPMQVDQFRTWAFCEAFHSAQQTGMLRHDPAKILDSLAGPEFPRFMRCSGEGDKAHFYTPILGVCGPHYKPKEQDFLVSTLPIKQGEGVHIPIKIGGGVGGLPTHQWVKNFGRPSQLKNNDGYACYKLLCEQIEQGKRLVFMSAAPYVAGNAALISFGSSRKILKEQMPLCHYRNSIPESVDGLTGYFDAPLPAATIGKSYFANGETYAALCEFKNGEVLDIVGPTNVQILNGAVRQGKVPCLAAHSVGTKFKVSLVCNKTMCPHHHHTGPTFEQAFRTCWLSKCKTKETQVSPWFGTKFLGIS.

Topologically, residues 565–1140 (MITTLAQSIF…QGREFIVSNG (576 aa)) are cytoplasmic. One can recognise an SF3 helicase domain in the interval 733 to 899 (MKDLLELQKR…PGVIFDPDNA (167 aa)). ATP is bound at residue 763-770 (GPSHCGKS). A helical transmembrane segment spans residues 1141 to 1161 (GGILMIAAAIILVLVCGWGFW). Over 1162 to 1187 (KAFVGLFTGSMSLGAALAGCQEAEVK) the chain is Lumenal. The Peptidase C3 domain occupies 1213 to 1422 (SYARSQAGNG…WACILPNPHL (210 aa)). Active-site for picornain 3C-like protease activity residues include histidine 1256, glutamate 1294, and cysteine 1386. Residues 1697–1825 (NEAINCDYSG…SVSPAVASWF (129 aa)) enclose the RdRp catalytic domain.

Belongs to the nepoviruses RNA1 polyprotein family. Specific enzymatic cleavages by picornain 3C-like protease in vivo yield mature proteins. Picornain 3C-like protease is autocatalytically processed. Post-translationally, VPg is uridylylated by the polymerase and is covalently linked to the 5'-end of genomic RNA. This uridylylated form acts as a nucleotide-peptide primer for the polymerase.

The protein resides in the host endoplasmic reticulum lumen. It localises to the host endoplasmic reticulum membrane. It carries out the reaction RNA(n) + a ribonucleoside 5'-triphosphate = RNA(n+1) + diphosphate. In terms of biological role, picornain 3C-like protease is a thiol protease that cleaves the P1 and P2 polyproteins. The polypeptide is RNA1 polyprotein (Apium graveolens (Celery)).